The chain runs to 272 residues: Protein alcS (272 aa).

The segment covering 1–14 has biased composition (polar residues); it reads MDTEQGLKNHTAKT. The tract at residues 1-21 is disordered; sequence MDTEQGLKNHTAKTSPHDETA. 6 consecutive transmembrane segments (helical) span residues 63 to 83, 91 to 111, 122 to 144, 164 to 184, 192 to 212, and 225 to 245; these read PLAL…LMGW, IAFT…TSIL, VVFG…AFNA, FLNT…IFLA, VYVA…GAYW, and LVVA…YLLV.

Belongs to the acetate uptake transporter (AceTr) (TC 2.A.96) family.

The protein resides in the cell membrane. It localises to the cell septum. This chain is Protein alcS, found in Aspergillus fumigatus (strain CBS 144.89 / FGSC A1163 / CEA10) (Neosartorya fumigata).